Here is a 108-residue protein sequence, read N- to C-terminus: uncharacterized protein (108 aa).

This is an uncharacterized protein from Rickettsia prowazekii (strain Madrid E).